Reading from the N-terminus, the 275-residue chain is Ribosomal RNA small subunit methyltransferase A (275 aa).

Residues Asn-27, Leu-29, Gly-54, Glu-76, Asp-102, and Asn-123 each contribute to the S-adenosyl-L-methionine site.

The protein belongs to the class I-like SAM-binding methyltransferase superfamily. rRNA adenine N(6)-methyltransferase family. RsmA subfamily.

The protein resides in the cytoplasm. It catalyses the reaction adenosine(1518)/adenosine(1519) in 16S rRNA + 4 S-adenosyl-L-methionine = N(6)-dimethyladenosine(1518)/N(6)-dimethyladenosine(1519) in 16S rRNA + 4 S-adenosyl-L-homocysteine + 4 H(+). Specifically dimethylates two adjacent adenosines (A1518 and A1519) in the loop of a conserved hairpin near the 3'-end of 16S rRNA in the 30S particle. May play a critical role in biogenesis of 30S subunits. The polypeptide is Ribosomal RNA small subunit methyltransferase A (Chelativorans sp. (strain BNC1)).